The chain runs to 334 residues: Protein-methionine-sulfoxide reductase catalytic subunit MsrP (334 aa).

Positions 1 to 44 form a signal peptide, tat-type signal; that stretch reads MKKNQFLKESDVTAESVFFMTRRQVLKALGISAAALSLPHAAHA. Mo-molybdopterin is bound by residues asparagine 88, 91-92, cysteine 146, threonine 181, asparagine 233, arginine 238, and 249-251; these read YE and GIK.

The protein belongs to the MsrP family. In terms of assembly, heterodimer of a catalytic subunit (MsrP) and a heme-binding subunit (MsrQ). The cofactor is Mo-molybdopterin. In terms of processing, predicted to be exported by the Tat system. The position of the signal peptide cleavage has not been experimentally proven.

The protein resides in the periplasm. It catalyses the reaction L-methionyl-[protein] + a quinone + H2O = L-methionyl-(S)-S-oxide-[protein] + a quinol. The catalysed reaction is L-methionyl-[protein] + a quinone + H2O = L-methionyl-(R)-S-oxide-[protein] + a quinol. Part of the MsrPQ system that repairs oxidized periplasmic proteins containing methionine sulfoxide residues (Met-O), using respiratory chain electrons. Thus protects these proteins from oxidative-stress damage caused by reactive species of oxygen and chlorine generated by the host defense mechanisms. MsrPQ is essential for the maintenance of envelope integrity under bleach stress, rescuing a wide series of structurally unrelated periplasmic proteins from methionine oxidation, including the primary periplasmic chaperone SurA and the lipoprotein Pal. The catalytic subunit MsrP is non-stereospecific, being able to reduce both (R-) and (S-) diastereoisomers of methionine sulfoxide. This chain is Protein-methionine-sulfoxide reductase catalytic subunit MsrP, found in Escherichia coli (strain 55989 / EAEC).